We begin with the raw amino-acid sequence, 183 residues long: TATA-box-binding protein 2 (183 aa).

2 repeat units span residues 8 to 84 (IENV…AKKL) and 99 to 177 (VQNI…RQQL).

The protein belongs to the TBP family.

General factor that plays a role in the activation of archaeal genes transcribed by RNA polymerase. Binds specifically to the TATA box promoter element which lies close to the position of transcription initiation. The sequence is that of TATA-box-binding protein 2 from Methanosarcina mazei (strain ATCC BAA-159 / DSM 3647 / Goe1 / Go1 / JCM 11833 / OCM 88) (Methanosarcina frisia).